Reading from the N-terminus, the 719-residue chain is Phosphoribosylformylglycinamidine synthase subunit PurL (719 aa).

Residue histidine 47 is part of the active site. Tyrosine 50 and lysine 89 together coordinate ATP. Glutamate 91 provides a ligand contact to Mg(2+). Residues 92 to 95 (SHNH) and arginine 114 each bind substrate. Residue histidine 93 is the Proton acceptor of the active site. Aspartate 115 contacts Mg(2+). Glutamine 238 provides a ligand contact to substrate. Aspartate 266 is a Mg(2+) binding site. 310–312 (ESQ) is a substrate binding site. ATP contacts are provided by aspartate 488 and glycine 525. Asparagine 526 is a Mg(2+) binding site. Position 528 (serine 528) interacts with substrate.

This sequence belongs to the FGAMS family. In terms of assembly, monomer. Part of the FGAM synthase complex composed of 1 PurL, 1 PurQ and 2 PurS subunits.

It is found in the cytoplasm. The enzyme catalyses N(2)-formyl-N(1)-(5-phospho-beta-D-ribosyl)glycinamide + L-glutamine + ATP + H2O = 2-formamido-N(1)-(5-O-phospho-beta-D-ribosyl)acetamidine + L-glutamate + ADP + phosphate + H(+). The protein operates within purine metabolism; IMP biosynthesis via de novo pathway; 5-amino-1-(5-phospho-D-ribosyl)imidazole from N(2)-formyl-N(1)-(5-phospho-D-ribosyl)glycinamide: step 1/2. Functionally, part of the phosphoribosylformylglycinamidine synthase complex involved in the purines biosynthetic pathway. Catalyzes the ATP-dependent conversion of formylglycinamide ribonucleotide (FGAR) and glutamine to yield formylglycinamidine ribonucleotide (FGAM) and glutamate. The FGAM synthase complex is composed of three subunits. PurQ produces an ammonia molecule by converting glutamine to glutamate. PurL transfers the ammonia molecule to FGAR to form FGAM in an ATP-dependent manner. PurS interacts with PurQ and PurL and is thought to assist in the transfer of the ammonia molecule from PurQ to PurL. This chain is Phosphoribosylformylglycinamidine synthase subunit PurL, found in Roseobacter denitrificans (strain ATCC 33942 / OCh 114) (Erythrobacter sp. (strain OCh 114)).